Consider the following 123-residue polypeptide: ATP synthase epsilon chain (123 aa).

This sequence belongs to the ATPase epsilon chain family. As to quaternary structure, F-type ATPases have 2 components, CF(1) - the catalytic core - and CF(0) - the membrane proton channel. CF(1) has five subunits: alpha(3), beta(3), gamma(1), delta(1), epsilon(1). CF(0) has three main subunits: a, b and c.

The protein localises to the cell inner membrane. Functionally, produces ATP from ADP in the presence of a proton gradient across the membrane. This chain is ATP synthase epsilon chain, found in Helicobacter pylori (strain HPAG1).